Reading from the N-terminus, the 383-residue chain is Acetylornithine deacetylase (383 aa).

Position 80 (His-80) interacts with Zn(2+). The active site involves Asp-82. Asp-112 contributes to the Zn(2+) binding site. Glu-144 is a catalytic residue. Zn(2+) contacts are provided by Glu-145, Glu-169, and His-355.

This sequence belongs to the peptidase M20A family. ArgE subfamily. Homodimer. Zn(2+) is required as a cofactor. It depends on Co(2+) as a cofactor. Glutathione serves as cofactor.

It localises to the cytoplasm. It carries out the reaction N(2)-acetyl-L-ornithine + H2O = L-ornithine + acetate. It functions in the pathway amino-acid biosynthesis; L-arginine biosynthesis; L-ornithine from N(2)-acetyl-L-ornithine (linear): step 1/1. Its function is as follows. Catalyzes the hydrolysis of the amide bond of N(2)-acetylated L-amino acids. Cleaves the acetyl group from N-acetyl-L-ornithine to form L-ornithine, an intermediate in L-arginine biosynthesis pathway, and a branchpoint in the synthesis of polyamines. This is Acetylornithine deacetylase from Salmonella paratyphi A (strain ATCC 9150 / SARB42).